The following is a 312-amino-acid chain: Taste receptor type 2 member 103 (312 aa).

Over 1–6 (MVLTIR) the chain is Extracellular. The helical transmembrane segment at 7–27 (AILWVTLITIISLEFIIGILG) threads the bilayer. The Cytoplasmic segment spans residues 28-61 (NVFIALVNIIDWVKRGKISAVDKTYMALAISRTA). A helical transmembrane segment spans residues 62-82 (FLLSLITGFLVSLLDPALLGM). Residues 83–92 (RTMVRLLTIS) are Extracellular-facing. The helical transmembrane segment at 93–113 (WMVTNHFSVWFATCLSIFYFL) threads the bilayer. At 114 to 132 (KIANFSNSIFLVLKWEAKK) the chain is on the cytoplasmic side. A helical membrane pass occupies residues 133–153 (VVSVTLVVSVIILIMNIIVIN). Topologically, residues 154 to 185 (KFTDRLQVNTLQNCSTSNTLKDYGLFLFISTG) are extracellular. Residue asparagine 166 is glycosylated (N-linked (GlcNAc...) asparagine). The chain crosses the membrane as a helical span at residues 186 to 206 (FTLTPFAVSLTMFLLLIFSLW). Residues 207 to 229 (RHLKNMCHSATGSRDVSTVAHIK) lie on the Cytoplasmic side of the membrane. A helical membrane pass occupies residues 230-250 (GLQTVVTFLLLYTAFVMSLLS). At 251–264 (ESLNINIQHTNLLS) the chain is on the extracellular side. A helical transmembrane segment spans residues 265 to 285 (HFLRSIGVAFPTGHSCVLILG). The Cytoplasmic segment spans residues 286-312 (NSKLRQASLSVILWLRYKYKHIENWGP).

Belongs to the G-protein coupled receptor T2R family. Expressed in subsets of taste receptor cells of the tongue and palate epithelium and exclusively in gustducin-positive cells. Expressed in 15% taste bud cells in circumvallate and foliate papillae but only in 2% in fungiform papillae.

It localises to the membrane. Functionally, gustducin-coupled receptor implicated in the perception of bitter compounds in the oral cavity and the gastrointestinal tract. Signals through PLCB2 and the calcium-regulated cation channel TRPM5. This Mus musculus (Mouse) protein is Taste receptor type 2 member 103 (Tas2r103).